The following is a 379-amino-acid chain: MSNIDGKLPDILSDAVLKQSVPVPDNFVKVEGIDYSKPESRNMRSKDLIKSMATMGFQASSLGKACDIIDEMRSWRGEHRDKLEEHDRKGSFDNDGYQKTTIFMGYTSNLISSGLRETLRFLVQNKMVDAIVATAGGVEEDIIKCLADTYLGEFSLPGKGLRDQGMNRIGNLLVPNDNYCKFEEWIVPILDKMLEEQENYVESQGKDCLDSNFDQDSPVWTPSKLIRRLGKEINDESSVLYWAYKNDIPIFCPAVTDGSIGDMLFFHTFKASPKQLRLDIVSDIRKINSMSMEASRAGMIILGGGLIKHHIANACLMRNGADYAVYINTGQEFDGSDAGARPDEAVSWGKIKADAKSVKVYADATVVFPLVVAATFASE.

NAD(+) contacts are provided by residues 108 to 112, 134 to 136, Glu-140, and Asp-257; these read SNLIS and TAG. Spermidine is bound at residue 139 to 140; that stretch reads EE. Spermidine is bound at residue Asp-262. NAD(+) is bound at residue Gly-304. Position 309 (His-309) interacts with spermidine. Position 329–330 (329–330) interacts with NAD(+); that stretch reads TG. Residues 335 to 337 and 344 to 350 contribute to the spermidine site; these read GSD and EAVSWGK. Catalysis depends on Lys-350, which acts as the Nucleophile. 363–364 contributes to the NAD(+) binding site; sequence DA.

Belongs to the deoxyhypusine synthase family. Requires NAD(+) as cofactor.

It carries out the reaction [eIF5A protein]-L-lysine + spermidine = [eIF5A protein]-deoxyhypusine + propane-1,3-diamine. It participates in protein modification; eIF5A hypusination. In terms of biological role, catalyzes the NAD-dependent oxidative cleavage of spermidine and the subsequent transfer of the butylamine moiety of spermidine to the epsilon-amino group of a specific lysine residue of the eIF-5A precursor protein to form the intermediate deoxyhypusine residue. This chain is Deoxyhypusine synthase (DYS1), found in Kluyveromyces lactis (strain ATCC 8585 / CBS 2359 / DSM 70799 / NBRC 1267 / NRRL Y-1140 / WM37) (Yeast).